We begin with the raw amino-acid sequence, 360 residues long: MPKKILFTGGGTVGHVTLNLILIPKFIKDGWEVHYIGDKNGIEHTEIEKSGLDVTFHAIATGKLRRYFSWQNLADVFKVALGLLQSLFIVAKLRPQALFSKGGFVSVPPVVAAKLLGKPVFIHESDRSMGLANKIAYKFATTVYTTFEQEDQLSKVKHLGAVTKVFKDANQIPESTQLEAVNEYFSRDLKTLLFIGGSAGAHVFNQFISDHPELKQRYNIINITGDPHLNELSSHLYRVDYVTDLYQPLMAMADLVVTRGGSNTLFELLAMAKLHLIVPLGKEASRGDQLENATYFEKRGYAKQLQEPDLTLHNFDQAMADLFEHQADYEATMLATKEIQSPDFFYDLLRADISSAIKEK.

UDP-N-acetyl-alpha-D-glucosamine contacts are provided by Ser198 and Gln289.

Belongs to the glycosyltransferase 28 family. MurG subfamily.

It is found in the cell membrane. It carries out the reaction Mur2Ac(oyl-L-Ala-gamma-D-Glu-L-Lys-D-Ala-D-Ala)-di-trans,octa-cis-undecaprenyl diphosphate + UDP-N-acetyl-alpha-D-glucosamine = beta-D-GlcNAc-(1-&gt;4)-Mur2Ac(oyl-L-Ala-gamma-D-Glu-L-Lys-D-Ala-D-Ala)-di-trans,octa-cis-undecaprenyl diphosphate + UDP + H(+). The protein operates within cell wall biogenesis; peptidoglycan biosynthesis. Functionally, cell wall formation. Catalyzes the transfer of a GlcNAc subunit on undecaprenyl-pyrophosphoryl-MurNAc-pentapeptide (lipid intermediate I) to form undecaprenyl-pyrophosphoryl-MurNAc-(pentapeptide)GlcNAc (lipid intermediate II). This chain is UDP-N-acetylglucosamine--N-acetylmuramyl-(pentapeptide) pyrophosphoryl-undecaprenol N-acetylglucosamine transferase, found in Streptococcus pyogenes serotype M6 (strain ATCC BAA-946 / MGAS10394).